A 75-amino-acid chain; its full sequence is Exodeoxyribonuclease 7 small subunit (75 aa).

The protein belongs to the XseB family. As to quaternary structure, heterooligomer composed of large and small subunits.

The protein localises to the cytoplasm. The enzyme catalyses Exonucleolytic cleavage in either 5'- to 3'- or 3'- to 5'-direction to yield nucleoside 5'-phosphates.. Its function is as follows. Bidirectionally degrades single-stranded DNA into large acid-insoluble oligonucleotides, which are then degraded further into small acid-soluble oligonucleotides. The chain is Exodeoxyribonuclease 7 small subunit from Chlamydia pneumoniae (Chlamydophila pneumoniae).